A 24-amino-acid polypeptide reads, in one-letter code: Conotoxin PIVE (24 aa).

3 cysteine pairs are disulfide-bonded: C2-C10, C3-C15, and C13-C19. K24 carries the post-translational modification Lysine amide.

This sequence belongs to the conotoxin A superfamily. Expressed by the venom duct.

Its subcellular location is the secreted. Functionally, probable neurotoxin with ion channel inhibitor activity. In vivo, elicits dose-dependently excitatory activity upon injection into fish. Its action is slowly reversible. The protein is Conotoxin PIVE of Conus purpurascens (Purple cone).